Consider the following 1132-residue polypeptide: Fas-binding factor 1 homolog (1132 aa).

3 disordered regions span residues 18-50 (DDLLGYDDEGPAKSSQPAGVSSGRARGSSLQAS), 65-84 (AEDMEAAEGSSISDADPQAV), and 89-570 (KEMD…QSYE). The segment covering 35–46 (AGVSSGRARGSS) has biased composition (low complexity). Composition is skewed to basic and acidic residues over residues 134–148 (APEKGESAPEMDKKP) and 189–206 (GSERRPERKTELGKEKDP). A compositionally biased stretch (acidic residues) spans 226–235 (TFEDDDDDMM). Basic and acidic residues-rich tracts occupy residues 244 to 270 (QKGDQKHGKKAEEEEVRPARSKLDELL) and 278 to 303 (ILERPGAGEHREFKLDKKYQKQPEKE). Composition is skewed to polar residues over residues 331–341 (RQSVSRFSAEN) and 388–410 (AKTSPVVSSQQLLAKEQATSKPN). Composition is skewed to low complexity over residues 458 to 480 (ATSTGAAAQAAALQDKAASADSS) and 511 to 520 (PSDPAASSPA). Residues 534 to 548 (TMPSTPLQAASQLQA) are compositionally biased toward polar residues. 3 coiled-coil regions span residues 576–727 (RAAL…TSAT), 769–882 (ARQR…LAVE), and 918–1044 (LAKE…HKKL).

It is found in the cytoplasm. The protein localises to the cytoskeleton. The protein resides in the microtubule organizing center. It localises to the centrosome. Its subcellular location is the centriole. It is found in the spindle pole. The protein localises to the cell junction. Functionally, keratin-binding protein required for epithelial cell polarization. Required for ciliogenesis. The protein is Fas-binding factor 1 homolog (FBF1) of Gallus gallus (Chicken).